The primary structure comprises 495 residues: Probable aspartic-type endopeptidase OPSB (495 aa).

The signal sequence occupies residues 1-19; it reads MRGDSFIWSLATAIPLLST. Residues 73-408 form the Peptidase A1 domain; sequence YFCNLTLGTP…DLDNNEISIA (336 aa). Asparagine 76 carries an N-linked (GlcNAc...) asparagine glycan. Aspartate 91 is an active-site residue. A glycan (N-linked (GlcNAc...) asparagine) is linked at asparagine 136. Aspartate 290 is an active-site residue. Asparagine 413 is a glycosylation site (N-linked (GlcNAc...) asparagine). Residues 448-470 form a disordered region; that stretch reads TGLPGVETGVPGSRPPSSKAAGQ. The GPI-anchor amidated alanine moiety is linked to residue alanine 467. A propeptide spans 468 to 495 (removed in mature form); it reads AGQAKRPDFVLGVAAVGLAGAGMLFAAM.

It belongs to the peptidase A1 family.

The protein resides in the cell membrane. Probable GPI-anchored aspartic-type endopeptidase which contributes to virulence. The protein is Probable aspartic-type endopeptidase OPSB (OPSB) of Trichophyton verrucosum (strain HKI 0517).